The following is a 257-amino-acid chain: Deoxyribose-phosphate aldolase (257 aa).

Aspartate 102 acts as the Proton donor/acceptor in catalysis. The Schiff-base intermediate with acetaldehyde role is filled by lysine 166. The Proton donor/acceptor role is filled by lysine 198.

Belongs to the DeoC/FbaB aldolase family. DeoC type 2 subfamily.

It localises to the cytoplasm. The enzyme catalyses 2-deoxy-D-ribose 5-phosphate = D-glyceraldehyde 3-phosphate + acetaldehyde. It functions in the pathway carbohydrate degradation; 2-deoxy-D-ribose 1-phosphate degradation; D-glyceraldehyde 3-phosphate and acetaldehyde from 2-deoxy-alpha-D-ribose 1-phosphate: step 2/2. Its function is as follows. Catalyzes a reversible aldol reaction between acetaldehyde and D-glyceraldehyde 3-phosphate to generate 2-deoxy-D-ribose 5-phosphate. This Shewanella halifaxensis (strain HAW-EB4) protein is Deoxyribose-phosphate aldolase.